The following is a 545-amino-acid chain: Sterol O-acyltransferase 1 (545 aa).

Methionine 1 is modified (N-acetylmethionine). The segment at 1–24 is disordered; that stretch reads MVGEETSLRNRLSRSAENPEQDEA. The Cytoplasmic segment spans residues 1 to 133; the sequence is MVGEETSLRN…LDELFEVDHI (133 aa). Serine 7 bears the Phosphoserine mark. The segment covering 9–18 has biased composition (polar residues); the sequence is RNRLSRSAEN. Histidine 132 is a cholesterol binding site. A helical transmembrane segment spans residues 134 to 155; it reads RTIYHMFIALLIIFILSTLVVD. Over 156–175 the chain is Lumenal; it reads YIDEGRLVLEFSLLAYAFGQ. Residues 176 to 201 form a helical membrane-spanning segment; that stretch reads FPIVIWTWWAMFLSTLAIPYFLFQRW. Residues 202 to 213 are Cytoplasmic-facing; the sequence is AHGYSKSSHPLI. Residues 214-239 traverse the membrane as a helical segment; the sequence is YSLIHGAFFLVFQLGILGFIPTYVVL. At 240–247 the chain is on the lumenal side; it reads AYTLPPAS. The helical transmembrane segment at 248-271 threads the bilayer; that stretch reads RFILILEQIRLVMKAHSYVRENVP. Residues 272 to 314 are Cytoplasmic-facing; the sequence is RVLSAAKEKSSTVPVPTVNQYLYFLFAPTLIYRDSYPRTPTVR. Residues 315 to 347 form a helical membrane-spanning segment; that stretch reads WGYVAMQFLQVFGCLFYVYYIFERLCAPLFRNI. Residues 348–364 lie on the Lumenal side of the membrane; it reads KQEPFSARVLVLCVFNS. The chain crosses the membrane as a helical span at residues 365 to 390; it reads ILPGVLMLFLSFFAFLHCWLNAFAEM. The Cytoplasmic portion of the chain corresponds to 391–438; that stretch reads LRFGDRMFYKDWWNSTSYSNYYRTWNVVVHDWLYYYVYKDLLWFFSKR. The short motif at 398-404 is the FYXDWWN motif element; the sequence is FYKDWWN. An acyl-CoA-binding residues include asparagine 410, arginine 413, asparagine 416, histidine 420, tyrosine 428, and serine 451. The chain crosses the membrane as a helical span at residues 439-463; sequence FRPAAMLAVFALSAVVHEYALAVCL. Histidine 455 is a catalytic residue. The Lumenal portion of the chain corresponds to 464–469; that stretch reads SYFYPV. The helical transmembrane segment at 470 to 485 threads the bilayer; it reads LFVLFMFFGMAFNFIV. Topologically, residues 486 to 491 are cytoplasmic; that stretch reads NDSRKR. Residues 492–523 traverse the membrane as a helical segment; the sequence is PVWNIMVRASLFLGHGVILCFYSQEWYARQRC. A disulfide bridge connects residues cysteine 523 and cysteine 541. Residues 524-545 lie on the Lumenal side of the membrane; it reads PLKNPTFLDYVRPRTWTCRYVF.

It belongs to the membrane-bound acyltransferase family. Sterol o-acyltransferase subfamily. May form homo- or heterodimers. Interacts with UBIAD1.

The protein localises to the endoplasmic reticulum membrane. It carries out the reaction a sterol + a long-chain fatty acyl-CoA = a long-chain 3-hydroxysterol ester + CoA. The catalysed reaction is cholesterol + an acyl-CoA = a cholesterol ester + CoA. The enzyme catalyses cholesterol + (9Z)-octadecenoyl-CoA = cholesteryl (9Z-octadecenoate) + CoA. It catalyses the reaction cholesterol + hexadecanoyl-CoA = cholesteryl hexadecanoate + CoA. It carries out the reaction octadecanoyl-CoA + cholesterol = cholesteryl octadecanoate + CoA. The catalysed reaction is (9Z,12Z)-octadecadienoyl-CoA + cholesterol = cholesteryl (9Z,12Z)-octadecadienoate + CoA. The enzyme catalyses (5Z,8Z,11Z,14Z)-eicosatetraenoyl-CoA + cholesterol = cholesteryl (5Z,8Z,11Z,14Z)-eicosatetraenoate + CoA. It catalyses the reaction (9Z)-hexadecenoyl-CoA + cholesterol = cholesteryl (9Z)-hexadecenoate + CoA. It carries out the reaction (11Z)-octadecenoyl-CoA + cholesterol = cholesteryl (11Z)-octadecenoate + CoA. The catalysed reaction is (7Z)-octadecenoyl-CoA + cholesterol = cholesteryl (7Z)-octadecenoate + CoA. Functionally, catalyzes the formation of fatty acid-cholesterol esters, which are less soluble in membranes than cholesterol. Plays a role in lipoprotein assembly and dietary cholesterol absorption. Preferentially utilizes oleoyl-CoA ((9Z)-octadecenoyl-CoA) as substrate: shows a higher activity towards an acyl-CoA substrate with a double bond at the delta-9 position (9Z) than towards saturated acyl-CoA or an unsaturated acyl-CoA with a double bond at the delta-7 (7Z) or delta-11 (11Z) positions. This is Sterol O-acyltransferase 1 from Rattus norvegicus (Rat).